The following is an 85-amino-acid chain: Large ribosomal subunit protein bL27 (85 aa).

A disordered region spans residues 1 to 26 (MAHKKGVGSSRNGRDSNPKMLGVKRF).

It belongs to the bacterial ribosomal protein bL27 family.

This Roseiflexus sp. (strain RS-1) protein is Large ribosomal subunit protein bL27.